The sequence spans 225 residues: Lipid A 4'-phosphatase (225 aa).

A run of 6 helical transmembrane segments spans residues 29–49 (SAFT…YILL), 51–71 (NFHW…ITFA), 110–130 (FGFP…LICL), 136–156 (LSIF…YLGL), 160–180 (GDLV…YFIA), and 203–223 (TEVM…YSIV).

It belongs to the lipid A LpxF 4'-phosphatase family.

It is found in the cell inner membrane. It participates in bacterial outer membrane biogenesis; LPS lipid A biosynthesis. Probably removes the 4'-phosphate group from lipid A. Removal of this phosphate group confers resistance to cationic antimicrobial peptides (CAMPs), inflammation-associated peptides produced by the human host. This LPS modification helps maintain the stability of this commensal bacterium in gut microbiota. This Bacteroides thetaiotaomicron (strain ATCC 29148 / DSM 2079 / JCM 5827 / CCUG 10774 / NCTC 10582 / VPI-5482 / E50) protein is Lipid A 4'-phosphatase.